The primary structure comprises 220 residues: uncharacterized protein (220 aa).

This is an uncharacterized protein from Acidianus two-tailed virus (ATV).